The following is a 294-amino-acid chain: Putative glucose-6-phosphate 1-epimerase (294 aa).

Substrate-binding residues include Arg-74 and Arg-99. His-164 is a catalytic residue. Residue Asp-208 participates in substrate binding. Glu-267 is an active-site residue.

The protein belongs to the glucose-6-phosphate 1-epimerase family. In terms of assembly, monomer in solution.

The catalysed reaction is alpha-D-glucose 6-phosphate = beta-D-glucose 6-phosphate. This Escherichia coli (strain K12) protein is Putative glucose-6-phosphate 1-epimerase (yeaD).